A 109-amino-acid polypeptide reads, in one-letter code: Oncomodulin-1 (109 aa).

Residue S2 is modified to N-acetylserine. EF-hand domains are found at residues 39 to 74 (MSANQVKDVFRFIDNDQSGYLDEEELKFFLQKFESG) and 78 to 109 (LTESETKSLMAAADNDGDGKIGAEEFQEMVHS). The Ca(2+) site is built by D52, D54, S56, Y58, E63, D91, D93, D95, K97, and E102.

It belongs to the parvalbumin family.

In terms of biological role, has some calmodulin-like activity with respect to enzyme activation and growth regulation. Binds two calcium ions. This chain is Oncomodulin-1 (OCM), found in Homo sapiens (Human).